A 72-amino-acid polypeptide reads, in one-letter code: Putative transmembrane protein DDB_G0272126 (72 aa).

The next 2 helical transmembrane spans lie at 6–26 and 38–58; these read KIIKSSYTLLSFFYFIANTII and IILVSLYYLVFSLFITRIFYG.

The protein resides in the membrane. The sequence is that of Putative transmembrane protein DDB_G0272126 from Dictyostelium discoideum (Social amoeba).